Here is a 196-residue protein sequence, read N- to C-terminus: Imidazoleglycerol-phosphate dehydratase (196 aa).

The protein belongs to the imidazoleglycerol-phosphate dehydratase family.

It is found in the cytoplasm. The catalysed reaction is D-erythro-1-(imidazol-4-yl)glycerol 3-phosphate = 3-(imidazol-4-yl)-2-oxopropyl phosphate + H2O. Its pathway is amino-acid biosynthesis; L-histidine biosynthesis; L-histidine from 5-phospho-alpha-D-ribose 1-diphosphate: step 6/9. This Clostridium botulinum (strain Kyoto / Type A2) protein is Imidazoleglycerol-phosphate dehydratase.